The sequence spans 139 residues: Large ribosomal subunit protein uL16 (139 aa).

Residues Met1–Met17 are compositionally biased toward basic residues. Residues Met1–His25 are disordered.

The protein belongs to the universal ribosomal protein uL16 family. Part of the 50S ribosomal subunit.

Its function is as follows. Binds 23S rRNA and is also seen to make contacts with the A and possibly P site tRNAs. The chain is Large ribosomal subunit protein uL16 from Christiangramia forsetii (strain DSM 17595 / CGMCC 1.15422 / KT0803) (Gramella forsetii).